Consider the following 387-residue polypeptide: 1-deoxy-D-xylulose 5-phosphate reductoisomerase (387 aa).

Positions 10, 11, 13, 38, and 122 each coordinate NADPH. Lysine 123 contacts 1-deoxy-D-xylulose 5-phosphate. Residue glutamate 124 participates in NADPH binding. A Mn(2+)-binding site is contributed by aspartate 148. 1-deoxy-D-xylulose 5-phosphate is bound by residues serine 149, glutamate 150, serine 174, and histidine 197. Glutamate 150 is a binding site for Mn(2+). Residue glycine 203 coordinates NADPH. Residues serine 210, asparagine 215, lysine 216, and glutamate 219 each coordinate 1-deoxy-D-xylulose 5-phosphate. Glutamate 219 is a binding site for Mn(2+).

The protein belongs to the DXR family. Mg(2+) is required as a cofactor. Mn(2+) serves as cofactor.

It carries out the reaction 2-C-methyl-D-erythritol 4-phosphate + NADP(+) = 1-deoxy-D-xylulose 5-phosphate + NADPH + H(+). The protein operates within isoprenoid biosynthesis; isopentenyl diphosphate biosynthesis via DXP pathway; isopentenyl diphosphate from 1-deoxy-D-xylulose 5-phosphate: step 1/6. In terms of biological role, catalyzes the NADPH-dependent rearrangement and reduction of 1-deoxy-D-xylulose-5-phosphate (DXP) to 2-C-methyl-D-erythritol 4-phosphate (MEP). This is 1-deoxy-D-xylulose 5-phosphate reductoisomerase from Ehrlichia ruminantium (strain Gardel).